The sequence spans 308 residues: Glycine--tRNA ligase alpha subunit (308 aa).

This sequence belongs to the class-II aminoacyl-tRNA synthetase family. Tetramer of two alpha and two beta subunits.

Its subcellular location is the cytoplasm. It catalyses the reaction tRNA(Gly) + glycine + ATP = glycyl-tRNA(Gly) + AMP + diphosphate. This chain is Glycine--tRNA ligase alpha subunit, found in Brucella canis (strain ATCC 23365 / NCTC 10854 / RM-666).